Here is a 235-residue protein sequence, read N- to C-terminus: uncharacterized protein (235 aa).

The next 7 membrane-spanning stretches (helical) occupy residues 2–22 (VIGP…GALL), 34–54 (MTSI…VKCA), 56–76 (LPAM…CLLE), 102–122 (FIQN…GIFG), 147–167 (MIFA…LLII), 178–198 (ILPL…GLLL), and 210–230 (MFPV…SAAW).

The protein localises to the cell membrane. This is an uncharacterized protein from Escherichia coli (strain K12).